We begin with the raw amino-acid sequence, 1279 residues long: ATP-dependent helicase/nuclease subunit A (1279 aa).

The 496-residue stretch at 4-499 (TKWTDEQRQA…VKLFKNFRSR (496 aa)) folds into the UvrD-like helicase ATP-binding domain. 25–32 (AGAGAGKT) is an ATP binding site. A UvrD-like helicase C-terminal domain is found at 526-853 (EEALKVGASY…RIMSIHKSKG (328 aa)).

This sequence belongs to the helicase family. AddA subfamily. As to quaternary structure, heterodimer of AddA and AddB/RexB. Requires Mg(2+) as cofactor.

The catalysed reaction is Couples ATP hydrolysis with the unwinding of duplex DNA by translocating in the 3'-5' direction.. It catalyses the reaction ATP + H2O = ADP + phosphate + H(+). Functionally, the heterodimer acts as both an ATP-dependent DNA helicase and an ATP-dependent, dual-direction single-stranded exonuclease. Recognizes the chi site generating a DNA molecule suitable for the initiation of homologous recombination. The AddA nuclease domain is required for chi fragment generation; this subunit has the helicase and 3' -&gt; 5' nuclease activities. This Clostridium botulinum (strain Hall / ATCC 3502 / NCTC 13319 / Type A) protein is ATP-dependent helicase/nuclease subunit A.